The chain runs to 365 residues: Aminomethyltransferase (365 aa).

Belongs to the GcvT family. In terms of assembly, the glycine cleavage system is composed of four proteins: P, T, L and H.

It carries out the reaction N(6)-[(R)-S(8)-aminomethyldihydrolipoyl]-L-lysyl-[protein] + (6S)-5,6,7,8-tetrahydrofolate = N(6)-[(R)-dihydrolipoyl]-L-lysyl-[protein] + (6R)-5,10-methylene-5,6,7,8-tetrahydrofolate + NH4(+). Functionally, the glycine cleavage system catalyzes the degradation of glycine. The chain is Aminomethyltransferase from Chlorobaculum parvum (strain DSM 263 / NCIMB 8327) (Chlorobium vibrioforme subsp. thiosulfatophilum).